The chain runs to 383 residues: F-box/kelch-repeat protein At1g16250 (383 aa).

The F-box domain maps to 7-54; it reads SIIPGLPDDLALRCIAKLSHGYHGVLECVSRGWRDLVRGADYSCYKAR. Kelch repeat units lie at residues 50–103, 109–165, 166–214, 216–263, and 318–377; these read CYKA…GFAC, CLLV…SVSG, KVYV…SYRG, FHVL…VMKN, and ELYV…CVSL.

The sequence is that of F-box/kelch-repeat protein At1g16250 from Arabidopsis thaliana (Mouse-ear cress).